A 398-amino-acid polypeptide reads, in one-letter code: Acetate kinase (398 aa).

Asn8 is a binding site for Mg(2+). Residue Lys15 coordinates ATP. Arg89 lines the substrate pocket. Asp146 acts as the Proton donor/acceptor in catalysis. ATP is bound by residues 206–210 (HIGNG), 283–285 (DMR), and 331–335 (GMGEN). Residue Glu383 coordinates Mg(2+).

This sequence belongs to the acetokinase family. Homodimer. Mg(2+) is required as a cofactor. It depends on Mn(2+) as a cofactor.

The protein localises to the cytoplasm. The catalysed reaction is acetate + ATP = acetyl phosphate + ADP. The protein operates within metabolic intermediate biosynthesis; acetyl-CoA biosynthesis; acetyl-CoA from acetate: step 1/2. Functionally, catalyzes the formation of acetyl phosphate from acetate and ATP. Can also catalyze the reverse reaction. The protein is Acetate kinase of Streptococcus pyogenes serotype M6 (strain ATCC BAA-946 / MGAS10394).